Here is a 139-residue protein sequence, read N- to C-terminus: MAIEKTLSILKPDAVKNNITGKINSYIESSGLKIIAQKMMLLTKKQAELFYEIHKDRPFFGELVEFMTSGSVIVQVLVGENAVSKYRQIMGATNPKQADKGTIRGDFADDISENRVHGSDSLENARKEIAFFFAECELV.

ATP is bound by residues Lys-11, Phe-59, Arg-87, Thr-93, Arg-104, and Asn-114. The active-site Pros-phosphohistidine intermediate is the His-117.

It belongs to the NDK family. Homotetramer. Mg(2+) serves as cofactor.

Its subcellular location is the cytoplasm. It catalyses the reaction a 2'-deoxyribonucleoside 5'-diphosphate + ATP = a 2'-deoxyribonucleoside 5'-triphosphate + ADP. The enzyme catalyses a ribonucleoside 5'-diphosphate + ATP = a ribonucleoside 5'-triphosphate + ADP. Its function is as follows. Major role in the synthesis of nucleoside triphosphates other than ATP. The ATP gamma phosphate is transferred to the NDP beta phosphate via a ping-pong mechanism, using a phosphorylated active-site intermediate. This is Nucleoside diphosphate kinase from Wolbachia sp. subsp. Drosophila simulans (strain wRi).